The chain runs to 377 residues: Nitric oxide reductase FlRd-NAD(+) reductase (377 aa).

Belongs to the FAD-dependent oxidoreductase family. FAD serves as cofactor.

Its subcellular location is the cytoplasm. It catalyses the reaction 2 reduced [nitric oxide reductase rubredoxin domain] + NAD(+) + H(+) = 2 oxidized [nitric oxide reductase rubredoxin domain] + NADH. It functions in the pathway nitrogen metabolism; nitric oxide reduction. Functionally, one of at least two accessory proteins for anaerobic nitric oxide (NO) reductase. Reduces the rubredoxin moiety of NO reductase. This is Nitric oxide reductase FlRd-NAD(+) reductase from Shigella dysenteriae serotype 1 (strain Sd197).